A 301-amino-acid chain; its full sequence is UDP-N-acetylenolpyruvoylglucosamine reductase (301 aa).

Residues 29-195 (KIGGPADVFV…VEAIFSLTRG (167 aa)) form the FAD-binding PCMH-type domain. Arginine 174 is an active-site residue. Serine 224 serves as the catalytic Proton donor. Glutamate 294 is an active-site residue.

The protein belongs to the MurB family. Requires FAD as cofactor.

It is found in the cytoplasm. It carries out the reaction UDP-N-acetyl-alpha-D-muramate + NADP(+) = UDP-N-acetyl-3-O-(1-carboxyvinyl)-alpha-D-glucosamine + NADPH + H(+). The protein operates within cell wall biogenesis; peptidoglycan biosynthesis. Its function is as follows. Cell wall formation. The polypeptide is UDP-N-acetylenolpyruvoylglucosamine reductase (Halalkalibacterium halodurans (strain ATCC BAA-125 / DSM 18197 / FERM 7344 / JCM 9153 / C-125) (Bacillus halodurans)).